We begin with the raw amino-acid sequence, 460 residues long: Argininosuccinate lyase (460 aa).

The protein belongs to the lyase 1 family. Argininosuccinate lyase subfamily.

It is found in the cytoplasm. The enzyme catalyses 2-(N(omega)-L-arginino)succinate = fumarate + L-arginine. It functions in the pathway amino-acid biosynthesis; L-arginine biosynthesis; L-arginine from L-ornithine and carbamoyl phosphate: step 3/3. The polypeptide is Argininosuccinate lyase (Staphylococcus haemolyticus (strain JCSC1435)).